Reading from the N-terminus, the 311-residue chain is Probable manganese-dependent inorganic pyrophosphatase (311 aa).

Mn(2+)-binding residues include H9, D13, D15, D77, H99, and D151.

This sequence belongs to the PPase class C family. Requires Mn(2+) as cofactor.

Its subcellular location is the cytoplasm. It carries out the reaction diphosphate + H2O = 2 phosphate + H(+). The chain is Probable manganese-dependent inorganic pyrophosphatase from Streptococcus agalactiae serotype Ia (strain ATCC 27591 / A909 / CDC SS700).